The following is a 37-amino-acid chain: Kappa-actitoxin-Bgr1a (37 aa).

Residues 2 to 37 enclose the ShKT domain; sequence CRDWFKETACRHAKSLGNCRTSQKYRANCAKTCELC. 3 disulfides stabilise this stretch: cysteine 2-cysteine 37, cysteine 11-cysteine 30, and cysteine 20-cysteine 34. A crucial for binding to potassium channels region spans residues 25–26; that stretch reads KY.

Belongs to the sea anemone type 1 potassium channel toxin family. Type 1b subfamily.

Its subcellular location is the secreted. It localises to the nematocyst. Functionally, inhibits voltage-dependent potassium channels of the Kv1 family (Kv1.1/KCNA1 (Kd=6 nM), Kv1.2/KCNA2 (Kd=15 nM), Kv1.3/KCNA3 (Kd=10-39 nM), Kv1.6/KCNA6, and KCa3.1/KCNN4 (Kd=172 nM)). This chain is Kappa-actitoxin-Bgr1a, found in Bunodosoma granuliferum (Red warty sea anemone).